The sequence spans 690 residues: Putative glycerophosphocholine phosphodiesterase GPCPD1 homolog 1 (690 aa).

Positions 1-122 constitute a CBM20 domain; that stretch reads MDQDYKAHFK…RKNITDQFGS (122 aa). In terms of domain architecture, GP-PDE spans 344 to 654; it reads MLQIGHRGMG…DRIGEDEVLK (311 aa). The tract at residues 670–690 is disordered; sequence ARSQHNSRSPSMSRRCMSTVE. Positions 676-690 are enriched in low complexity; the sequence is SRSPSMSRRCMSTVE.

This sequence belongs to the glycerophosphoryl diester phosphodiesterase family.

This chain is Putative glycerophosphocholine phosphodiesterase GPCPD1 homolog 1, found in Caenorhabditis elegans.